The sequence spans 175 residues: Ribosome maturation factor RimM (175 aa).

Positions 95 to 175 constitute a PRC barrel domain; it reads SEDEFYWREL…RIEVDWDPGF (81 aa).

This sequence belongs to the RimM family. In terms of assembly, binds ribosomal protein uS19.

Its subcellular location is the cytoplasm. In terms of biological role, an accessory protein needed during the final step in the assembly of 30S ribosomal subunit, possibly for assembly of the head region. Essential for efficient processing of 16S rRNA. May be needed both before and after RbfA during the maturation of 16S rRNA. It has affinity for free ribosomal 30S subunits but not for 70S ribosomes. The protein is Ribosome maturation factor RimM of Aliivibrio fischeri (strain MJ11) (Vibrio fischeri).